We begin with the raw amino-acid sequence, 146 residues long: NADH-quinone oxidoreductase subunit A (146 aa).

The next 3 helical transmembrane spans lie at 14–34 (FGLF…GGFL), 68–88 (LVAM…AWAV), and 96–116 (IGFI…IYLV).

This sequence belongs to the complex I subunit 3 family. In terms of assembly, NDH-1 is composed of 13 different subunits. Subunits NuoA, H, J, K, L, M, N constitute the membrane sector of the complex.

It localises to the cell inner membrane. The catalysed reaction is a quinone + NADH + 5 H(+)(in) = a quinol + NAD(+) + 4 H(+)(out). In terms of biological role, NDH-1 shuttles electrons from NADH, via FMN and iron-sulfur (Fe-S) centers, to quinones in the respiratory chain. The immediate electron acceptor for the enzyme in this species is believed to be ubiquinone. Couples the redox reaction to proton translocation (for every two electrons transferred, four hydrogen ions are translocated across the cytoplasmic membrane), and thus conserves the redox energy in a proton gradient. The chain is NADH-quinone oxidoreductase subunit A from Pectobacterium carotovorum subsp. carotovorum (Erwinia carotovora subsp. carotovora).